Here is a 459-residue protein sequence, read N- to C-terminus: MANITNEFMGHDMLAPFTAGWQSDMEPLVIEKSEGSYVYDINGKKYLDTLSGLWCATLGGSETRLVEAANKQLNTLPFYHSFWNRTTKPSLDLAKELLNMFTANKMAKVFFTNSGSEANDTQVKLVWYYNNALGRPQKKKIIARAKAYHGSTYISAGLSGLPPMHQKFDLPPPFVLHTECPHYWAYHLPGETEEEFSTRLANNLESLILKEGPETVAAFIAEPVLGAAGVILPPATYFDKVQTILRKYDILFIADEVVCGFGRLGTMFGGDKYNIKPDLVSVAKALSSGYMPIAAVLVSQKISSVILSESNKIGAFCHGFTYSGHPVACAVALEALKIYKERNITEVVNKISQKFQEGLKAFADSPIIGEIRGTGLALSTEFVDNKSPNDPFPYEWAVGTYFGAQCAKYGMLVSSTGDHVNMAPPFMLSLEELDELIRIYGKALKDTEKRVEELKSQKK.

Pyridoxal 5'-phosphate-binding positions include 115–116 (GS) and aspartate 255. Lysine 284 bears the N6-(pyridoxal phosphate)lysine mark. Residue 320–321 (FT) participates in pyridoxal 5'-phosphate binding. Positions 428–459 (LSLEELDELIRIYGKALKDTEKRVEELKSQKK) form a coiled coil.

The protein belongs to the class-III pyridoxal-phosphate-dependent aminotransferase family. In terms of tissue distribution, expressed in placental tissue of immature fruit.

It carries out the reaction vanillin + L-alanine = vanillylamine + pyruvate. It participates in aromatic compound metabolism; phenylpropanoid biosynthesis. Involved in the biosynthesis of capsaicinoids natural products, pungent alkaloids synthesized from phenylpropanoid intermediates in the placental tissue of chili pepper fruit acting as repellant on herbivorous mammals and conferring spiciness to hot peppers. Can transfer an amine from vanillylamine to pyruvate forming vanillin and L-alanine. Can use pyruvate or oxaloacetate, but not 2-oxoglutarate as amino group acceptors. Is able to convert (S)-1-phenylethylamine into acetophenone in vitro. The protein is Vanillin aminotransferase of Capsicum chinense (Scotch bonnet).